We begin with the raw amino-acid sequence, 137 residues long: Putative pre-16S rRNA nuclease (137 aa).

It belongs to the YqgF nuclease family.

It is found in the cytoplasm. Functionally, could be a nuclease involved in processing of the 5'-end of pre-16S rRNA. The sequence is that of Putative pre-16S rRNA nuclease from Buchnera aphidicola subsp. Baizongia pistaciae (strain Bp).